A 188-amino-acid polypeptide reads, in one-letter code: Protein TIFY 9 (188 aa).

The tract at residues 20-41 (DADDRHAKSGGSSASSSSSIRG) is disordered. A compositionally biased stretch (low complexity) spans 28 to 38 (SGGSSASSSSS). One can recognise a Tify domain in the interval 80–114 (AAAAAAPMTLFYNGSVAVFDVSHDKAEAIMRMATE). The Jas signature appears at 135–160 (PLTRTKSLQRFLSKRKERLTSLGPYQ). Positions 156-188 (LGPYQVGGPAAVGATTSTTTKSFLAKEEEHTAS) are disordered. Positions 179-188 (LAKEEEHTAS) are enriched in basic and acidic residues.

The protein belongs to the TIFY/JAZ family. Interacts with COI1A and COI2 in a coronatine-dependent manner. Coronatine is an analog of jasmonoyl isoleucine (JA-Ile). In terms of processing, ubiquitinated. Targeted for degradation by the SCF(COI1) E3 ubiquitin ligase-proteasome pathway during jasmonate signaling.

Functionally, repressor of jasmonate responses. This Oryza sativa subsp. japonica (Rice) protein is Protein TIFY 9.